We begin with the raw amino-acid sequence, 238 residues long: DNA repair protein RecO (238 aa).

The protein belongs to the RecO family.

Functionally, involved in DNA repair and RecF pathway recombination. The protein is DNA repair protein RecO of Flavobacterium psychrophilum (strain ATCC 49511 / DSM 21280 / CIP 103535 / JIP02/86).